A 90-amino-acid chain; its full sequence is Major mite allergen Der p 23 (90 aa).

Positions methionine 1–alanine 21 are cleaved as a signal peptide. Residues alanine 22–aspartate 42 are disordered. Residues threonine 30 to glutamate 39 show a composition bias toward low complexity. Positions lysine 44–threonine 90 constitute a Chitin-binding type-2 domain. Intrachain disulfides connect cysteine 47/cysteine 66 and cysteine 76/cysteine 89. The segment at glycine 52–threonine 90 is important for IgE-binding.

As to quaternary structure, monomer. Expressed in epithelial cells of the midgut.

Its subcellular location is the secreted. It is found in the endoplasmic reticulum. The protein resides in the cytoplasmic vesicle. Does not bind chitin in vitro. This Dermatophagoides pteronyssinus (European house dust mite) protein is Major mite allergen Der p 23.